A 290-amino-acid polypeptide reads, in one-letter code: Lipoyl synthase (290 aa).

[4Fe-4S] cluster contacts are provided by C44, C49, C55, C70, C74, C77, and S282. In terms of domain architecture, Radical SAM core spans 56 to 271 (WGEGTATFMI…ELLGKEMGFR (216 aa)).

It belongs to the radical SAM superfamily. Lipoyl synthase family. Requires [4Fe-4S] cluster as cofactor.

The protein resides in the cytoplasm. It carries out the reaction [[Fe-S] cluster scaffold protein carrying a second [4Fe-4S](2+) cluster] + N(6)-octanoyl-L-lysyl-[protein] + 2 oxidized [2Fe-2S]-[ferredoxin] + 2 S-adenosyl-L-methionine + 4 H(+) = [[Fe-S] cluster scaffold protein] + N(6)-[(R)-dihydrolipoyl]-L-lysyl-[protein] + 4 Fe(3+) + 2 hydrogen sulfide + 2 5'-deoxyadenosine + 2 L-methionine + 2 reduced [2Fe-2S]-[ferredoxin]. It participates in protein modification; protein lipoylation via endogenous pathway; protein N(6)-(lipoyl)lysine from octanoyl-[acyl-carrier-protein]: step 2/2. In terms of biological role, catalyzes the radical-mediated insertion of two sulfur atoms into the C-6 and C-8 positions of the octanoyl moiety bound to the lipoyl domains of lipoate-dependent enzymes, thereby converting the octanoylated domains into lipoylated derivatives. The protein is Lipoyl synthase of Flavobacterium psychrophilum (strain ATCC 49511 / DSM 21280 / CIP 103535 / JIP02/86).